The sequence spans 358 residues: F-box/kelch-repeat protein SKIP4 (358 aa).

The 48-residue stretch at Ala-20–Glu-67 folds into the F-box domain. Kelch repeat units lie at residues Leu-78–Lys-122, Arg-123–Gly-171, Ile-173–Gly-219, Arg-220–Gln-269, Phe-271–Asn-307, and Ser-308–Ser-355.

As to quaternary structure, part of a SCF (SKP1-cullin-F-box) protein ligase complex. Interacts with SKP1A/ASK1.

The protein operates within protein modification; protein ubiquitination. This Arabidopsis thaliana (Mouse-ear cress) protein is F-box/kelch-repeat protein SKIP4 (SKIP4).